A 1578-amino-acid chain; its full sequence is Mediator of RNA polymerase II transcription subunit 14 (1578 aa).

The LXXLL motif 1 motif lies at 49-53 (LAELL). The tract at residues 561–582 (SQSVTAGGTSQSSAPSAATTES) is disordered. Over residues 565-580 (TAGGTSQSSAPSAATT) the composition is skewed to low complexity. Positions 739-743 (LKRLL) match the LXXLL motif 2 motif. Disordered regions lie at residues 1009-1173 (RRRS…PDHK) and 1510-1578 (APGG…GGPN). The span at 1084–1093 (SQSHPNFNMT) shows a compositional bias: polar residues. Pro residues-rich tracts occupy residues 1095–1104 (PPAPHMPHPS) and 1157–1167 (PGMPRPSPRPG). Gly residues-rich tracts occupy residues 1510–1521 (APGGPGGPGPMG) and 1547–1578 (MGGG…GGPN).

This sequence belongs to the Mediator complex subunit 14 family. Component of the Mediator complex.

It is found in the nucleus. Functionally, component of the Mediator complex, a coactivator involved in the regulated transcription of nearly all RNA polymerase II-dependent genes. Mediator functions as a bridge to convey information from gene-specific regulatory proteins to the basal RNA polymerase II transcription machinery. Mediator is recruited to promoters by direct interactions with regulatory proteins and serves as a scaffold for the assembly of a functional preinitiation complex with RNA polymerase II and the general transcription factors. This chain is Mediator of RNA polymerase II transcription subunit 14 (MED14), found in Aedes aegypti (Yellowfever mosquito).